The chain runs to 129 residues: Iron-sulfur cluster assembly 1 homolog, mitochondrial (129 aa).

The transit peptide at 1–12 (MASSVVRATVRA) directs the protein to the mitochondrion. The Fe cation site is built by Cys57, Cys121, and Cys123.

It belongs to the HesB/IscA family.

The protein resides in the mitochondrion. Involved in the maturation of mitochondrial 4Fe-4S proteins functioning late in the iron-sulfur cluster assembly pathway. Probably involved in the binding of an intermediate of Fe/S cluster assembly. This Gallus gallus (Chicken) protein is Iron-sulfur cluster assembly 1 homolog, mitochondrial (ISCA1).